A 504-amino-acid polypeptide reads, in one-letter code: Lysine--tRNA ligase (504 aa).

The 'HIGH' region signature appears at proline 23–asparagine 31.

Belongs to the class-I aminoacyl-tRNA synthetase family.

Its subcellular location is the cytoplasm. It carries out the reaction tRNA(Lys) + L-lysine + ATP = L-lysyl-tRNA(Lys) + AMP + diphosphate. This is Lysine--tRNA ligase from Picrophilus torridus (strain ATCC 700027 / DSM 9790 / JCM 10055 / NBRC 100828 / KAW 2/3).